The chain runs to 86 residues: Large ribosomal subunit protein uL23 (86 aa).

It belongs to the universal ribosomal protein uL23 family. In terms of assembly, part of the 50S ribosomal subunit. Contacts protein L29.

Binds to 23S rRNA. One of the proteins that surrounds the polypeptide exit tunnel on the outside of the ribosome. This is Large ribosomal subunit protein uL23 from Pyrococcus furiosus (strain ATCC 43587 / DSM 3638 / JCM 8422 / Vc1).